The following is a 388-amino-acid chain: Chorismate synthase (388 aa).

2 residues coordinate NADP(+): arginine 39 and arginine 45. FMN contacts are provided by residues arginine 130–serine 132, asparagine 251–alanine 252, alanine 296, lysine 311–threonine 315, and arginine 337.

Belongs to the chorismate synthase family. In terms of assembly, homotetramer. FMNH2 is required as a cofactor.

It carries out the reaction 5-O-(1-carboxyvinyl)-3-phosphoshikimate = chorismate + phosphate. Its pathway is metabolic intermediate biosynthesis; chorismate biosynthesis; chorismate from D-erythrose 4-phosphate and phosphoenolpyruvate: step 7/7. Functionally, catalyzes the anti-1,4-elimination of the C-3 phosphate and the C-6 proR hydrogen from 5-enolpyruvylshikimate-3-phosphate (EPSP) to yield chorismate, which is the branch point compound that serves as the starting substrate for the three terminal pathways of aromatic amino acid biosynthesis. This reaction introduces a second double bond into the aromatic ring system. The protein is Chorismate synthase of Streptococcus equi subsp. equi (strain 4047).